Here is a 211-residue protein sequence, read N- to C-terminus: Probable nicotinate-nucleotide adenylyltransferase (211 aa).

The protein belongs to the NadD family.

The catalysed reaction is nicotinate beta-D-ribonucleotide + ATP + H(+) = deamido-NAD(+) + diphosphate. Its pathway is cofactor biosynthesis; NAD(+) biosynthesis; deamido-NAD(+) from nicotinate D-ribonucleotide: step 1/1. Its function is as follows. Catalyzes the reversible adenylation of nicotinate mononucleotide (NaMN) to nicotinic acid adenine dinucleotide (NaAD). In Desulfotalea psychrophila (strain LSv54 / DSM 12343), this protein is Probable nicotinate-nucleotide adenylyltransferase.